The chain runs to 189 residues: Protein Rex (189 aa).

Over residues 1–16 (MPKTRRRPRRSQRKRP) the composition is skewed to basic residues. The disordered stretch occupies residues 1–28 (MPKTRRRPRRSQRKRPPTPWPTSQGLDR). The Nuclear localization signal, and RNA-binding (RxRE) signature appears at 2-18 (PKTRRRPRRSQRKRPPT). The segment at 56 to 70 (RPVYIVTPYWPPVQS) is homomultimerization. Ser70 is subject to Phosphoserine; by host. The Nuclear export signal motif lies at 82–93 (LSAQLYSSLSLD). A compositionally biased stretch (low complexity) spans 84–94 (AQLYSSLSLDS). The interval 84-189 (AQLYSSLSLD…PPSPGPSCPT (106 aa)) is disordered. A compositionally biased stretch (pro residues) spans 111–125 (RRPPIQPPTFHPPSS). Residues 123-131 (PSSRPCANT) are homomultimerization. Over residues 127–164 (PCANTPPSETDTWNPPLGSTSQPCLFQTPASGPKTCTP) the composition is skewed to polar residues. A Phosphothreonine; by host modification is found at Thr174. Ser177 carries the post-translational modification Phosphoserine; by host. A compositionally biased stretch (pro residues) spans 178-189 (FPPPSPGPSCPT).

The protein belongs to the deltaretrovirus Rex protein family. In terms of assembly, homomultimer. Multimeric assembly is essential for activity and involves XPO1. Binds to human XPO1 and KPNB1. Interacts (via N-terminal nuclear localization signal) with human NPM1. Post-translationally, phosphorylated.

It localises to the host nucleus. The protein resides in the host nucleolus. Its subcellular location is the host cytoplasm. Functionally, rex escorts unspliced gag-pro-pol and singly spliced env mRNAs out of the nucleus of infected cells. These mRNAs carry a recognition sequence called Rex responsive element (RxRE or XRE) located at the 3' region of the long terminal repeat (LTR). This function is essential since most HTLV proteins are translated from unspliced or partially spliced pre-mRNAs that cannot exit the nucleus by the pathway used by fully processed cellular mRNAs. Rex itself is translated from a fully spliced mRNA that probably readily exits the nucleus. Rex's nuclear localization signal (NLS) binds directly to KPNB1/importin beta-1 without previous binding to KPNA1/importin alpha-1. KPNB1 binds to the GDP bound form of RAN (Ran-GDP) and targets Rex to the nucleus. In the nucleus, the conversion from Ran-GDP to Ran-GTP dissociates Rex from KPNB1 and allows Rex's binding to the RRE in viral pre-mRNAs. Rex multimerizes on the RRE via cooperative assembly. This multimerization is critical for its full biological activity, since it may shield the viral RNA from being spliced or down-regulated, and probably exposes Rex's nuclear export signal (NES) to the surface. Rex can then form a complex with XPO1/CRM1, RANBP3 and Ran-GTP, leading to nuclear export of the complex. Conversion from Ran-GTP to Ran-GDP mediates dissociation of the Rex/RRE/XPO1/RANBP3/RAN complex, so that Rex can return to the nucleus for a subsequent round of export. The sequence is that of Protein Rex from Homo sapiens (Human).